The sequence spans 35 residues: Cupiennin-2b (35 aa).

Glutamine 35 is modified (glutamine amide).

In terms of tissue distribution, expressed by the venom gland.

The protein localises to the secreted. In Cupiennius salei (American wandering spider), this protein is Cupiennin-2b.